The chain runs to 474 residues: uncharacterized protein (474 aa).

The helical transmembrane segment at 374-398 (GLICYLALFSISLMIENIIGLTISL) threads the bilayer.

The protein localises to the membrane. This is an uncharacterized protein from Borreliella burgdorferi (strain ATCC 35210 / DSM 4680 / CIP 102532 / B31) (Borrelia burgdorferi).